The primary structure comprises 186 residues: Nicotinamidase/pyrazinamidase (186 aa).

Catalysis depends on D8, which acts as the Proton acceptor. The Fe cation site is built by D49, H51, H57, and H71. K96 is a catalytic residue. The active-site Nucleophile is the C138.

This sequence belongs to the isochorismatase family. In terms of assembly, monomer. Mn(2+) is required as a cofactor. Fe(2+) serves as cofactor.

The enzyme catalyses nicotinamide + H2O = nicotinate + NH4(+). The catalysed reaction is pyrazinamide + H2O = pyrazine-2-carboxylate + NH4(+). It functions in the pathway cofactor biosynthesis; nicotinate biosynthesis; nicotinate from nicotinamide: step 1/1. Its activity is regulated as follows. Is inhibited by Cu(2+), Zn(2+) and Fe(3+). Catalyzes the deamidation of nicotinamide (NAM) into nicotinate. Likely functions in the cyclical salvage pathway for production of NAD from nicotinamide. In terms of biological role, is involved in the activation of the first-line antituberculous drug pyrazinamide (PZA) by converting it into the active form, pyrazinoic acid. The sequence is that of Nicotinamidase/pyrazinamidase from Mycobacterium tuberculosis (strain ATCC 25618 / H37Rv).